The sequence spans 422 residues: Elongation factor 1-gamma (422 aa).

The GST N-terminal domain occupies 1 to 82 (MALVLHAGKT…YVARLKADNP (82 aa)). Residues 87–215 (SLIDYAHIEQ…VKQTESVPPV (129 aa)) form the GST C-terminal domain. The disordered stretch occupies residues 210-269 (ESVPPVPSAKKPSQPKETKSKAKEEPKKEAKKEPAKPKAEAAEEVEEAPKPKPKNPLDLL). A compositionally biased stretch (basic and acidic residues) spans 223-250 (QPKETKSKAKEEPKKEAKKEPAKPKAEA). The EF-1-gamma C-terminal domain occupies 262 to 422 (PKNPLDLLPP…EALLDAKCFK (161 aa)).

As to quaternary structure, EF-1 is composed of four subunits: alpha, beta, delta, and gamma.

In terms of biological role, probably plays a role in anchoring the complex to other cellular components. In Prunus avium (Cherry), this protein is Elongation factor 1-gamma.